The sequence spans 407 residues: D-galactonate dehydratase family member Pjdr2_1176 (407 aa).

A Mg(2+)-binding site is contributed by aspartate 208. Residue histidine 210 coordinates D-arabinonate. Residues glutamate 234 and glutamate 260 each contribute to the Mg(2+) site. Residues glutamate 260, arginine 281, and glutamate 337 each coordinate D-arabinonate.

It belongs to the mandelate racemase/muconate lactonizing enzyme family. GalD subfamily.

Has no detectable activity with D-mannonate and with a panel of 70 other acid sugars (in vitro), in spite of the conservation of the residues that are expected to be important for catalytic activity and cofactor binding. May have evolved a divergent function. This is D-galactonate dehydratase family member Pjdr2_1176 from Paenibacillus sp. (strain JDR-2).